Here is a 1654-residue protein sequence, read N- to C-terminus: Microtubule cross-linking factor 2 (1654 aa).

The disordered stretch occupies residues 1–188 (METPAGESSA…VAASSVGSSR (188 aa)). A compositionally biased stretch (low complexity) spans 55–66 (GSATACGTASSA). Over residues 102–113 (GTGPRPPPPPPS) the composition is skewed to pro residues. The span at 132 to 147 (LGLELALSSDAESAAG) shows a compositional bias: low complexity. Residues 209 to 238 (PGGLVRELEELRSENDYLKDEIEELRAEML) form a required for association with Golgi apparatus membrane region. 5 coiled-coil regions span residues 216 to 279 (LEEL…AERR), 308 to 349 (SMRL…LQTE), 448 to 546 (LKLV…YRSE), 816 to 843 (IKDL…ERQL), and 1079 to 1113 (SQEK…LQKA). The interval 348-379 (TELDRPREHSLKKRGTRSLGKTDKKPTAQEDS) is disordered. Positions 1122 to 1145 (SDMEKQDNSWKEARSEKTHDKEGV) are enriched in basic and acidic residues. The tract at residues 1122–1146 (SDMEKQDNSWKEARSEKTHDKEGVS) is disordered. Ser1165 and Ser1251 each carry phosphoserine. Residues 1406–1505 (LVSVRSKQIS…HSGSTESVWK (100 aa)) form a KR-rich domain required for microtubules binding region. Disordered regions lie at residues 1427-1450 (RPCC…LDST), 1537-1560 (PTTA…YHQP), and 1627-1654 (NTIR…AAPQ). The span at 1628–1638 (TIRHSPSKCRL) shows a compositional bias: basic residues.

It belongs to the MTCL family. Interacts with CLASP2. Interacts with CLASP1. The C-terminal SOGA 25 kDa form occurs as a monomer. Post-translationally, proteolytically cleaved into a C-terminal SOGA 25 kDa form that is detected in plasma. Proteolytically cleaved in primary hepatocytes into a C-terminal SOGA 80 kDa form. In terms of processing, phosphorylated during mitosis in a CDK1-dependent manner. As to expression, expressed in liver (at protein level).

Its subcellular location is the secreted. The protein localises to the cytoplasm. The protein resides in the cytoskeleton. It localises to the golgi apparatus membrane. It is found in the midbody. Its function is as follows. Microtubule-associated factor that enables integration of the centrosomal and Golgi-associated microtubules on the Golgi membrane, supporting directional migration. Preferentially acts on the perinuclear microtubules accumulated around the Golgi. Associates with the Golgi membrane through the N-terminal coiled-coil region and directly binds microtubules through the C-terminal domain. Required for faithful chromosome segregation during mitosis. Regulates autophagy by playing a role in the reduction of glucose production in an adiponectin- and insulin-dependent manner. The chain is Microtubule cross-linking factor 2 (Mtcl2) from Mus musculus (Mouse).